Here is a 120-residue protein sequence, read N- to C-terminus: Non-specific lipid-transfer protein 1 (120 aa).

The first 25 residues, 1-25 (MARSMKLACVALVICMVVIAPMAEA), serve as a signal peptide directing secretion. 4 disulfides stabilise this stretch: cysteine 29–cysteine 78, cysteine 39–cysteine 55, cysteine 56–cysteine 101, and cysteine 76–cysteine 115. Phenylalanine 120 is a propeptide.

This sequence belongs to the plant LTP family. In terms of tissue distribution, expressed in roots, stem, leaves and tendrils of the mature plant.

Plant non-specific lipid-transfer proteins transfer phospholipids as well as galactolipids across membranes. May play a role in wax or cutin deposition in the cell walls of expanding epidermal cells and certain secretory tissues. Binds saturated and unsaturated lipids, jasmonic acid and lysolipids. Has antifungal activity against A.niger VKM F-2259 (IC(50)=40 uM), F.oxysporum TCXA-4 (IC(50)=20-40), F.solani VKM F-142 (IC(50)=20-40 uM) and N.crassa VKM F-184 (IC(50)=40 uM). Has weak antibacterial activity against A.tumefaciens A281, C.michiganensis VKM Ac-1144 and P.syringae VKM B-1546. This Pisum sativum (Garden pea) protein is Non-specific lipid-transfer protein 1.